A 655-amino-acid polypeptide reads, in one-letter code: p-hydroxybenzoic acid efflux pump subunit AaeB (655 aa).

11 helical membrane-spanning segments follow: residues 13–33 (FAVKLATAIVLALFVGFHFQL), 38–58 (WAVLTAAIVAAGPAFAAGGEP), 69–89 (LRIIGTFIGCIAGLVIIIAMI), 93–113 (LLMILVCCIWAGFCTWISSLV), 121–141 (WGLAGYTALIIVITIQPEPLL), 152–172 (EIVIGIVCAIMADLLFSPRSI), 370–390 (LFWLWTGWTSGSGAMVMIAVV), 407–427 (FIYGTLAALPLGLLYFLVIIP), 431–451 (QSMLLLCISLAVLGFFLGIEV), 459–479 (MGALASTINIIVLDNPMTFHF), and 482–502 (FLDSALGQIVGCVLAFTVILL).

The protein belongs to the aromatic acid exporter ArAE (TC 2.A.85) family.

It is found in the cell inner membrane. Forms an efflux pump with AaeA. Could function as a metabolic relief valve, allowing to eliminate certain compounds when they accumulate to high levels in the cell. This is p-hydroxybenzoic acid efflux pump subunit AaeB from Escherichia coli O81 (strain ED1a).